The chain runs to 202 residues: ATP-dependent Clp protease proteolytic subunit (202 aa).

Residue serine 106 is the Nucleophile of the active site. The active site involves histidine 131.

The protein belongs to the peptidase S14 family. In terms of assembly, fourteen ClpP subunits assemble into 2 heptameric rings which stack back to back to give a disk-like structure with a central cavity, resembling the structure of eukaryotic proteasomes.

The protein localises to the cytoplasm. It catalyses the reaction Hydrolysis of proteins to small peptides in the presence of ATP and magnesium. alpha-casein is the usual test substrate. In the absence of ATP, only oligopeptides shorter than five residues are hydrolyzed (such as succinyl-Leu-Tyr-|-NHMec, and Leu-Tyr-Leu-|-Tyr-Trp, in which cleavage of the -Tyr-|-Leu- and -Tyr-|-Trp bonds also occurs).. Its function is as follows. Cleaves peptides in various proteins in a process that requires ATP hydrolysis. Has a chymotrypsin-like activity. Plays a major role in the degradation of misfolded proteins. The polypeptide is ATP-dependent Clp protease proteolytic subunit (Acidovorax sp. (strain JS42)).